The primary structure comprises 189 residues: Adenylate kinase (189 aa).

10–15 (AAGKGT) provides a ligand contact to ATP. Residues 30-59 (STGDMLRAAIASGSELGQKVKGVLDRGELV) form an NMP region. AMP is bound by residues T31, R36, 57 to 59 (ELV), 85 to 88 (GFPR), and Q92. The segment at 126–136 (KRFAEQGRPDD) is LID. ATP is bound at residue R127. Positions 133 and 144 each coordinate AMP. A172 is an ATP binding site.

This sequence belongs to the adenylate kinase family. As to quaternary structure, monomer.

It is found in the cytoplasm. It catalyses the reaction AMP + ATP = 2 ADP. The protein operates within purine metabolism; AMP biosynthesis via salvage pathway; AMP from ADP: step 1/1. Its function is as follows. Catalyzes the reversible transfer of the terminal phosphate group between ATP and AMP. Plays an important role in cellular energy homeostasis and in adenine nucleotide metabolism. This Caulobacter sp. (strain K31) protein is Adenylate kinase.